The primary structure comprises 336 residues: Nicotinate-nucleotide--dimethylbenzimidazole phosphoribosyltransferase (336 aa).

The active-site Proton acceptor is the E304.

Belongs to the CobT family.

The catalysed reaction is 5,6-dimethylbenzimidazole + nicotinate beta-D-ribonucleotide = alpha-ribazole 5'-phosphate + nicotinate + H(+). It functions in the pathway nucleoside biosynthesis; alpha-ribazole biosynthesis; alpha-ribazole from 5,6-dimethylbenzimidazole: step 1/2. Catalyzes the synthesis of alpha-ribazole-5'-phosphate from nicotinate mononucleotide (NAMN) and 5,6-dimethylbenzimidazole (DMB). This Mesorhizobium japonicum (strain LMG 29417 / CECT 9101 / MAFF 303099) (Mesorhizobium loti (strain MAFF 303099)) protein is Nicotinate-nucleotide--dimethylbenzimidazole phosphoribosyltransferase.